The primary structure comprises 561 residues: Probable xyloglucan galactosyltransferase GT20 (561 aa).

Over 1–31 the chain is Cytoplasmic; the sequence is MVSKRKSRTSKTIEDSCIHLCSVFFRFLYYT. The chain crosses the membrane as a helical; Signal-anchor for type II membrane protein span at residues 32 to 52; it reads LPALFLFFFLLYLCLSFTTGI. Residues 53–561 are Lumenal-facing; sequence SYNNFHMCIF…LLKKINRSVV (509 aa). N-linked (GlcNAc...) asparagine glycans are attached at residues asparagine 87, asparagine 253, asparagine 277, asparagine 418, asparagine 421, and asparagine 557.

It belongs to the glycosyltransferase 47 family. Expressed in hydathodes.

It localises to the golgi apparatus membrane. Functionally, functions in xyloglucan synthesis by adding side chains to the xylosylated glucan backbone. Involved in the galactosylation of hemicellulose xyloglucan. The sequence is that of Probable xyloglucan galactosyltransferase GT20 from Arabidopsis thaliana (Mouse-ear cress).